A 232-amino-acid chain; its full sequence is Transcriptional regulatory protein CpxR (232 aa).

The Response regulatory domain maps to 3–115 (KILLVDDDRE…ELVARIRAIL (113 aa)). Aspartate 51 bears the 4-aspartylphosphate mark. Residues 131 to 230 (SPTLEVDALS…LRGRGYLMVS (100 aa)) constitute a DNA-binding region (ompR/PhoB-type).

As to quaternary structure, interacts with cognate sensor kinase CpxA. In terms of processing, phosphorylated by CpxA.

The protein resides in the cytoplasm. The two-component system is activated by envelope stress such as overexpression of some (misfolded) periplasmic proteins. Functionally, response regulator member of the two-component regulatory system CpxA/CpxR which responds to envelope stress response by activating or, in some cases, repressing expression of downstream genes. Binds to the promoter regions of various genes in vitro, including ompC, cpxP, ryhB and mrkA and, when CpxR is phosphorylated, pecO. Represses expression of the major pilin of type 3 fimbriae MrkA as well as that of type 1 fimbriae FimA. Repression of expression of MrkA appears to be indirect, mediated by activation of the iron homeostasis regulator RyhB. The sequence is that of Transcriptional regulatory protein CpxR from Klebsiella pneumoniae subsp. pneumoniae (strain HS11286).